The sequence spans 375 residues: tRNA-specific 2-thiouridylase MnmA (375 aa).

ATP contacts are provided by residues 9-16 (AMSGGVDS) and Leu-35. Catalysis depends on Cys-105, which acts as the Nucleophile. Residues Cys-105 and Cys-201 are joined by a disulfide bond. Gly-129 is an ATP binding site. The tract at residues 151–153 (KNQ) is interaction with tRNA. Residue Cys-201 is the Cysteine persulfide intermediate of the active site. An interaction with tRNA region spans residues 307–308 (RY).

The protein belongs to the MnmA/TRMU family.

It is found in the cytoplasm. The enzyme catalyses S-sulfanyl-L-cysteinyl-[protein] + uridine(34) in tRNA + AH2 + ATP = 2-thiouridine(34) in tRNA + L-cysteinyl-[protein] + A + AMP + diphosphate + H(+). Its function is as follows. Catalyzes the 2-thiolation of uridine at the wobble position (U34) of tRNA, leading to the formation of s(2)U34. This chain is tRNA-specific 2-thiouridylase MnmA, found in Leptospira interrogans serogroup Icterohaemorrhagiae serovar Lai (strain 56601).